Consider the following 473-residue polypeptide: MKTLYSLRRFYPVETLFNGTLALAGRDQETTGFAWWAGNARLINLSGKLLGAHVAHAGLIVFWAGAMNLFEVAHFVPEKPMYEQGLILLPHLATLGWGVGPGGEVIDTFPYFVSGVLHLISSAVLGFGGIYHALLGPETLEESFPFFGYVWKDRNKMTTILGIHLILLGIGAFLLVFKALYFGGVYDTWAPGGGDVRKITNLTLSPSIIFGYLLKSPFGGEGWIVSVDDLEDIIGGHVWLGSICILGGIWHILTKPFAWARRALVWSGEAYLSYSLAAISVFGFIACCFVWFNNTAYPSEFYGPTGPEASQAQAFTFLVRDQRLGANVGSAQGPTGLGKYLMRSPTGEVIFGGETMRFWDLRAPWLEPLRGPNGLDLSRLKKDIQPWQERRSAEYMTHAPLGSLNSVGGVATEINAVNYVSPRSWLATSHFVLGFFFFVGHLWHAGRARAAAAGFEKGIDRDFEPVLSMTPLN.

Residues M1–E14 constitute a propeptide that is removed on maturation. The residue at position 15 (T15) is an N-acetylthreonine. At T15 the chain carries Phosphothreonine. 5 consecutive transmembrane segments (helical) span residues L69–A93, L134–N155, K178–T200, K255–S275, and W291–A312. [CaMn4O5] cluster is bound at residue E367. Residues R447 to P471 form a helical membrane-spanning segment.

It belongs to the PsbB/PsbC family. PsbC subfamily. In terms of assembly, PSII is composed of 1 copy each of membrane proteins PsbA, PsbB, PsbC, PsbD, PsbE, PsbF, PsbH, PsbI, PsbJ, PsbK, PsbL, PsbM, PsbT, PsbX, PsbY, PsbZ, Psb30/Ycf12, at least 3 peripheral proteins of the oxygen-evolving complex and a large number of cofactors. It forms dimeric complexes. It depends on Binds multiple chlorophylls and provides some of the ligands for the Ca-4Mn-5O cluster of the oxygen-evolving complex. It may also provide a ligand for a Cl- that is required for oxygen evolution. PSII binds additional chlorophylls, carotenoids and specific lipids. as a cofactor.

It is found in the plastid. Its subcellular location is the chloroplast thylakoid membrane. One of the components of the core complex of photosystem II (PSII). It binds chlorophyll and helps catalyze the primary light-induced photochemical processes of PSII. PSII is a light-driven water:plastoquinone oxidoreductase, using light energy to abstract electrons from H(2)O, generating O(2) and a proton gradient subsequently used for ATP formation. This chain is Photosystem II CP43 reaction center protein, found in Lactuca sativa (Garden lettuce).